A 499-amino-acid polypeptide reads, in one-letter code: Argininosuccinate lyase (499 aa).

The tract at residues M1–R22 is disordered. A compositionally biased stretch (basic and acidic residues) spans H7–R22.

The protein belongs to the lyase 1 family. Argininosuccinate lyase subfamily.

It localises to the cytoplasm. It catalyses the reaction 2-(N(omega)-L-arginino)succinate = fumarate + L-arginine. Its pathway is amino-acid biosynthesis; L-arginine biosynthesis; L-arginine from L-ornithine and carbamoyl phosphate: step 3/3. The sequence is that of Argininosuccinate lyase from Haloarcula marismortui (strain ATCC 43049 / DSM 3752 / JCM 8966 / VKM B-1809) (Halobacterium marismortui).